The primary structure comprises 509 residues: MTMPIIMIIGVVFFLLIALIAVFITKYRTAGPDEALIVTGSYLGNKNVHVDEGGNRIKIVRGGGTFVLPVFQQAEPLSLLSSKLDVSTPEVYTEQGVPVMADGTAIIKIGGSIGEIATAAEQFLGKSKDDREQEAREVLEGHLRSILGSMTVEEIYKNREKFSQEVQRVASQDLAKMGLVIVSFTIKDVRDKNGYLESLGKPRIAQVKRDADIATAEADKETRIKRAEADKDAKKSELERATEIAEAEKINQLKMAEFRREQDTAKANADQAYDLETARARQQVTEQEMQVKIIERQKQIELEEKEILRRERQYDSEVKKKADADRYSVEQSAAAEKAKQLAEADAKKYSIEAMAKAEAEKVRIDGLAKAEAEKAKGETEAEVIRLKGLAEAEAKEKIAAAFEQYGQAAIFDMIVKMLPEYAKQAAAPLSNIDKITVVDTGGSGESSGANKVTSYATNLMSSLQESLKASSGIDVKEMLENFSGKGNVKQSINELTNEIKEAKTIQKSE.

The Cytoplasmic segment spans residues 1-3 (MTM). The stretch at 4–24 (PIIMIIGVVFFLLIALIAVFI) is an intramembrane region. Residues 25–509 (TKYRTAGPDE…KEAKTIQKSE (485 aa)) are Cytoplasmic-facing. The interval 119 to 301 (AAEQFLGKSK…KIIERQKQIE (183 aa)) is PHB domain. The segment at 203 to 509 (RIAQVKRDAD…KEAKTIQKSE (307 aa)) is required for correct localization. 4 short sequence motifs (EA repeat) span residues 342-344 (AEA), 357-360 (AEAE), 370-373 (AEAE), and 390-394 (AEAEA). The not required for correct localization stretch occupies residues 485–509 (KGNVKQSINELTNEIKEAKTIQKSE).

The protein belongs to the band 7/mec-2 family. Flotillin subfamily. Homooligomerizes. Oligomerizes in very large complexes in vitro. Interacts with FloA, FtsH, FtsX, OppA, SdhA and SecY in detergent-resistant membrane (DRM) fractions. Interacts with FtsH at midcell. Interacts with FloA. Interacts in vivo with KinC, FloA, FtsH and ResE. Interacts with ResE, colocalizes with ResE in FloT-only membrane rafts. Another study shows nearly complete colocalization with NfeD2, but only minor colocalization with FtsH or KinC.

It localises to the cell membrane. It is found in the membrane raft. Its function is as follows. Found in functional membrane microdomains (FMM) that may be equivalent to eukaryotic membrane rafts. FMMs are highly dynamic and increase in number as cells age. FloA and FloT function is partially redundant; double deletions have marked synthetic phenotypes. Flotillins are thought to be important factors in membrane fluidity, especially during periods of rapid growth in rich media. Whether specific proteins are associated with FMMs is controversial; in one study FloT rafts have been shown to include proteins involved in adaptation to stationary phase, while FloA-FloT rafts include proteins involved in differentiation including sporulation, biofilm formation and DNA uptake competence. Another (more finely resolved) study only showed association of NfeD2 with FloT rafts of all the proteins examined. Aids homooligomerization of KinC and KinD but not KinB, may prevent incorrect hetero-association of the above kinases. Simultaneous overexpression of both FloA and FloT leads to defects in cell division and differentiation, in part caused by stabilization of FtsH and its subsequent increased ability to degrade proteins. Cells make more biofilm, are about half as long, have less EzrA and more frequent Z-rings. Involved in spatial organization of membranes, perhaps recruiting proteins (e.g. NfeD2) to specific membrane regions. Plays a role in phosphorylation of master regulator Spo0A, an early sporulation event. Plays a non-redundant role with dynamin-like protein A (dynA) in membrane dynamics and cell shape. This is Flotillin-like protein FloT from Bacillus subtilis (strain 168).